The chain runs to 815 residues: DNA replication licensing factor Mcm6 (815 aa).

The C4-type zinc-finger motif lies at 152-179; sequence CLDCQTEIRNVEQQFKFTNPTICRNPVC. Residues 338-544 enclose the MCM domain; sequence LYQNLITCLF…VVDYAIARKI (207 aa). Residues S391, T392, A393, K394, S395, and N496 each contribute to the ATP site. The Arginine finger signature appears at 520–523; the sequence is SRFD. R611 and E614 together coordinate ADP. The segment at 672–693 is disordered; sequence DDIDMENNGSAANTETDTLDTS. A compositionally biased stretch (polar residues) spans 678-693; that stretch reads NNGSAANTETDTLDTS.

It belongs to the MCM family. As to quaternary structure, component of the Mcm2-7 complex. The complex forms a toroidal hexameric ring with the proposed subunit order Mcm2-Mcm6-Mcm4-Mcm7-Mcm3-Mcm5. The heterodimers of mcm4/mcm6 and mcm3/mcm5 interact with mcm2 and mcm7.

It localises to the nucleus. The enzyme catalyses ATP + H2O = ADP + phosphate + H(+). Functionally, acts as a component of the Mcm2-7 complex (Mcm complex) which is the putative replicative helicase essential for 'once per cell cycle' DNA replication initiation and elongation in eukaryotic cells. Core component of CDC45-MCM-GINS (CMG) helicase, the molecular machine that unwinds template DNA during replication, and around which the replisome is built. The active ATPase sites in the Mcm2-7 ring are formed through the interaction surfaces of two neighboring subunits such that a critical structure of a conserved arginine finger motif is provided in trans relative to the ATP-binding site of the Walker A box of the adjacent subunit. The six ATPase active sites, however, are likely to contribute differentially to the complex helicase activity Required for DNA replication and cell proliferation. Required for mitotic cycles, endocycles, and the special S phase associated with the amplification of chorion genes; has a role in origin unwinding or fork elongation at chorion loci. Its function is as follows. Acts as a component of the MCM2-7 complex (MCM complex) which is the replicative helicase essential for 'once per cell cycle' DNA replication initiation and elongation in eukaryotic cells. Core component of CDC45-MCM-GINS (CMG) helicase, the molecular machine that unwinds template DNA during replication, and around which the replisome is built. The active ATPase sites in the MCM2-7 ring are formed through the interaction surfaces of two neighboring subunits such that a critical structure of a conserved arginine finger motif is provided in trans relative to the ATP-binding site of the Walker A box of the adjacent subunit. The six ATPase active sites, however, are likely to contribute differentially to the complex helicase activity. This Drosophila pseudoobscura pseudoobscura (Fruit fly) protein is DNA replication licensing factor Mcm6 (Mcm6).